We begin with the raw amino-acid sequence, 327 residues long: Serine/threonine-protein phosphatase PP1-beta catalytic subunit (327 aa).

Alanine 2 is subject to N-acetylalanine. Aspartate 63, histidine 65, aspartate 91, and asparagine 123 together coordinate Mn(2+). The active-site Proton donor is histidine 124. 2 residues coordinate Mn(2+): histidine 172 and histidine 247. The interval 305–327 (QYGGLNSGRPVTPPRTANPPKKR) is disordered.

It belongs to the PPP phosphatase family. PP-1 subfamily. Mn(2+) is required as a cofactor.

The protein resides in the cytoplasm. It localises to the nucleus. It catalyses the reaction O-phospho-L-seryl-[protein] + H2O = L-seryl-[protein] + phosphate. The catalysed reaction is O-phospho-L-threonyl-[protein] + H2O = L-threonyl-[protein] + phosphate. Protein phosphatase that associates with over 200 regulatory proteins to form highly specific holoenzymes which dephosphorylate hundreds of biological targets. Protein phosphatase (PP1) is essential for cell division, it participates in the regulation of glycogen metabolism, muscle contractility and protein synthesis. Involved in regulation of ionic conductances and long-term synaptic plasticity. The protein is Serine/threonine-protein phosphatase PP1-beta catalytic subunit (ppp1cb) of Xenopus laevis (African clawed frog).